The following is a 611-amino-acid chain: Exonuclease V, mitochondrial (611 aa).

The tract at residues 19–42 is disordered; the sequence is VTSEHEQVQSISKEESRSLSSNDL. The segment covering 21–35 has biased composition (basic and acidic residues); the sequence is SEHEQVQSISKEESR. Positions 147, 569, 572, and 578 each coordinate [4Fe-4S] cluster.

The protein belongs to the EXO5 family. As to quaternary structure, monomer. Mg(2+) is required as a cofactor. It depends on [4Fe-4S] cluster as a cofactor.

The protein localises to the mitochondrion. Its function is as follows. Single strand DNA specific 5'exonuclease involved in mitochondrial DNA replication and recombination. Releases dinucleotides as main products of catalysis. Has the capacity to slide across 5'double-stranded DNA or 5'RNA sequences and resumes cutting two nucleotides downstream of the double-stranded-to-single-stranded junction or RNA-to-DNA junction, respectively. The polypeptide is Exonuclease V, mitochondrial (EXO5) (Candida albicans (strain WO-1) (Yeast)).